A 915-amino-acid chain; its full sequence is Probable serine/threonine-protein kinase dyrk2 (915 aa).

4 stretches are compositionally biased toward low complexity: residues 51-79 (TSNT…PTIS), 108-119 (SSSKSSSNSSSI), 170-185 (SSSS…STTS), and 196-218 (SSNS…SGSS). Disordered regions lie at residues 51–119 (TSNT…SSSI), 132–334 (FSSS…SKSS), and 349–533 (AIKS…PTKS). The segment covering 234–260 (PSHTISDSPRSSTMKSRSVSISNGSLF) has biased composition (polar residues). 6 stretches are compositionally biased toward low complexity: residues 261–287 (SPTN…SSIS), 300–333 (SSST…PSKS), 352–364 (SRSL…LARV), 379–391 (SSSS…SFSS), 399–425 (SSSK…ASKI), and 433–533 (SLSS…PTKS). The region spanning 605 to 902 (FEIVSILGQG…AEQGLKHDWI (298 aa)) is the Protein kinase domain. ATP contacts are provided by residues 611 to 619 (LGQGSFCQV) and Lys634. The active-site Proton acceptor is the Asp731.

Belongs to the protein kinase superfamily. CMGC Ser/Thr protein kinase family. MNB/DYRK subfamily.

It carries out the reaction L-seryl-[protein] + ATP = O-phospho-L-seryl-[protein] + ADP + H(+). It catalyses the reaction L-threonyl-[protein] + ATP = O-phospho-L-threonyl-[protein] + ADP + H(+). The enzyme catalyses L-tyrosyl-[protein] + ATP = O-phospho-L-tyrosyl-[protein] + ADP + H(+). This chain is Probable serine/threonine-protein kinase dyrk2 (dyrk2), found in Dictyostelium discoideum (Social amoeba).